A 318-amino-acid chain; its full sequence is Ribose-phosphate pyrophosphokinase (318 aa).

Residues 46–48 and 105–106 contribute to the ATP site; these read DGE and RQ. Mg(2+) is bound by residues histidine 139 and aspartate 178. The active site involves lysine 201. Residues arginine 203, aspartate 227, and 231–235 each bind D-ribose 5-phosphate; that span reads DTAGT.

Belongs to the ribose-phosphate pyrophosphokinase family. Class I subfamily. In terms of assembly, homohexamer. It depends on Mg(2+) as a cofactor.

The protein localises to the cytoplasm. It catalyses the reaction D-ribose 5-phosphate + ATP = 5-phospho-alpha-D-ribose 1-diphosphate + AMP + H(+). Its pathway is metabolic intermediate biosynthesis; 5-phospho-alpha-D-ribose 1-diphosphate biosynthesis; 5-phospho-alpha-D-ribose 1-diphosphate from D-ribose 5-phosphate (route I): step 1/1. Involved in the biosynthesis of the central metabolite phospho-alpha-D-ribosyl-1-pyrophosphate (PRPP) via the transfer of pyrophosphoryl group from ATP to 1-hydroxyl of ribose-5-phosphate (Rib-5-P). This Helicobacter pylori (strain J99 / ATCC 700824) (Campylobacter pylori J99) protein is Ribose-phosphate pyrophosphokinase.